The sequence spans 270 residues: Nuclease PA3 (270 aa).

5 residues coordinate a divalent metal cation: Trp-1, His-6, His-15, Asp-45, and His-60. 1 to 6 lines the substrate pocket; sequence WGALGH. Residues 45 to 51, 60 to 63, and 73 to 78 each bind substrate; these read DEYRLTS, HFID, and NVDYER. 2 disulfide bridges follow: Cys-72–Cys-217 and Cys-80–Cys-85. Asn-92 is a substrate binding site. The N-linked (GlcNAc...) asparagine glycan is linked to Asn-92. Residues His-116, Asp-120, and His-126 each coordinate a divalent metal cation. Residues 116–164 form a substrate binding region; it reads HFIGDMTQPLHDEAYAVGGNKINVTFDGYHDNLHSDWDTYMPQKLIGGH. Asn-138 is a glycosylation site (N-linked (GlcNAc...) asparagine). His-149 and Asp-153 together coordinate a divalent metal cation. N-linked (GlcNAc...) asparagine glycosylation is found at Asn-184 and Asn-197.

It belongs to the nuclease type I family. Zn(2+) serves as cofactor.

It is found in the secreted. The catalysed reaction is a ribonucleoside 3'-phosphate + H2O = a ribonucleoside + phosphate. In terms of biological role, hydrolyzes only single-stranded DNA and RNA without apparent specificity for bases. This chain is Nuclease PA3, found in Penicillium sp.